Consider the following 369-residue polypeptide: Small ribosomal subunit biogenesis GTPase RsgA (369 aa).

The CP-type G domain occupies 88 to 246 (RTVLERPPVA…LADTPGFNQP (159 aa)). Residues 137–140 (NKQD) and 188–196 (GPSGVGKSS) each bind GTP. Positions 271, 276, 278, and 284 each coordinate Zn(2+). The disordered stretch occupies residues 307–369 (QNPENSRETD…DLDNLQEDWE (63 aa)). Residues 359 to 369 (TDLDNLQEDWE) are compositionally biased toward acidic residues.

The protein belongs to the TRAFAC class YlqF/YawG GTPase family. RsgA subfamily. In terms of assembly, monomer. Associates with 30S ribosomal subunit, binds 16S rRNA. Zn(2+) serves as cofactor.

Its subcellular location is the cytoplasm. Functionally, one of several proteins that assist in the late maturation steps of the functional core of the 30S ribosomal subunit. Helps release RbfA from mature subunits. May play a role in the assembly of ribosomal proteins into the subunit. Circularly permuted GTPase that catalyzes slow GTP hydrolysis, GTPase activity is stimulated by the 30S ribosomal subunit. This chain is Small ribosomal subunit biogenesis GTPase RsgA, found in Synechocystis sp. (strain ATCC 27184 / PCC 6803 / Kazusa).